We begin with the raw amino-acid sequence, 325 residues long: MATVHSPIPALYTVYILRSTVRHASFYVGSTPNPPRRLSQHNGLVRGGAVRTSRGNLRPWEMIILVSGFPSATAALKFEWALNNPHLSMHIPSAERLVVSTQRNRNGRPRRPAKSLASVASSLHLLLRVPSFARWPLCVQFFNRDAFAAWEKWCAGVSLGERGLRESWKVVTDFGEGVTSGGSGEVAAAEGEDEAPAPWGIHALPLDYEPMKEYVAKGQEIFEFERQGRCVVCREEMKSGEGLHAVCTHEGCDGVGHISCWSRSFLKNNDTGSILPVQGQCPMCKEEVDWADMMKELTLRLRGQKEVDKLLKRKRKRATKKAKKT.

Residues 10 to 92 (ALYTVYILRS…NNPHLSMHIP (83 aa)) form the GIY-YIG domain. The SLX1-type zinc-finger motif lies at 230–284 (CVVCREEMKSGEGLHAVCTHEGCDGVGHISCWSRSFLKNNDTGSILPVQGQCPMC).

This sequence belongs to the SLX1 family. Forms a heterodimer with SLX4. The cofactor is a divalent metal cation.

It is found in the nucleus. Functionally, catalytic subunit of the SLX1-SLX4 structure-specific endonuclease that resolves DNA secondary structures generated during DNA repair and recombination. Has endonuclease activity towards branched DNA substrates, introducing single-strand cuts in duplex DNA close to junctions with ss-DNA. This chain is Structure-specific endonuclease subunit SLX1, found in Chaetomium globosum (strain ATCC 6205 / CBS 148.51 / DSM 1962 / NBRC 6347 / NRRL 1970) (Soil fungus).